The primary structure comprises 514 residues: ATP synthase subunit alpha (514 aa).

170-177 (GDRQIGKT) is a binding site for ATP.

Belongs to the ATPase alpha/beta chains family. In terms of assembly, F-type ATPases have 2 components, CF(1) - the catalytic core - and CF(0) - the membrane proton channel. CF(1) has five subunits: alpha(3), beta(3), gamma(1), delta(1), epsilon(1). CF(0) has three main subunits: a(1), b(2) and c(9-12). The alpha and beta chains form an alternating ring which encloses part of the gamma chain. CF(1) is attached to CF(0) by a central stalk formed by the gamma and epsilon chains, while a peripheral stalk is formed by the delta and b chains.

It is found in the cell inner membrane. It carries out the reaction ATP + H2O + 4 H(+)(in) = ADP + phosphate + 5 H(+)(out). Functionally, produces ATP from ADP in the presence of a proton gradient across the membrane. The alpha chain is a regulatory subunit. The chain is ATP synthase subunit alpha from Pseudomonas putida (strain GB-1).